The sequence spans 68 residues: Large ribosomal subunit protein bL35 (68 aa).

2 stretches are compositionally biased toward basic residues: residues 1–15 (MPKMKSHSGTKKRFK) and 23–38 (TARKAGKRHLNEHKSS). A disordered region spans residues 1 to 38 (MPKMKSHSGTKKRFKVTGSGKVTARKAGKRHLNEHKSS).

This sequence belongs to the bacterial ribosomal protein bL35 family.

In Cutibacterium acnes (strain DSM 16379 / KPA171202) (Propionibacterium acnes), this protein is Large ribosomal subunit protein bL35.